The primary structure comprises 335 residues: Mycobacterial beta-ketoacyl-[acyl-carrier-protein] synthase III (335 aa).

Catalysis depends on residues cysteine 122 and histidine 258. Residues 259–263 (QANSR) are ACP-binding. Residue asparagine 289 is part of the active site.

The protein belongs to the thiolase-like superfamily. FabH family. Homodimer.

Its subcellular location is the cytoplasm. It carries out the reaction malonyl-[ACP] + dodecanoyl-CoA + H(+) = 3-oxotetradecanoyl-[ACP] + CO2 + CoA. Its pathway is lipid metabolism; fatty acid biosynthesis. The protein operates within lipid metabolism; mycolic acid biosynthesis. Catalyzes the condensation reaction of fatty acid synthesis by the addition to an acyl acceptor of two carbons from malonyl-ACP. Catalyzes the first condensation reaction which initiates fatty acid synthesis and may therefore play a role in governing the total rate of fatty acid production. Possesses both acetoacetyl-ACP synthase and acetyl transacylase activities. Its substrate specificity determines the biosynthesis of branched-chain and/or straight-chain of fatty acids. The protein is Mycobacterial beta-ketoacyl-[acyl-carrier-protein] synthase III of Mycobacterium ulcerans (strain Agy99).